Reading from the N-terminus, the 505-residue chain is MTQTNNKHYIVALDQGTTSSRAIVLDRDANVVSVAQHEFTQIYPQSGWVEHDPMEIWATQSATLVEALAQAGIDHRQVAAIGITNQRETTVIWDKQSGRPIHNAIVWQCRRSAAICEELKRDSLEEHVRERTGLVIDPYFSATKIKWVLDHVEGSRERARRGELLFGTVDSWLIWKMTQGRVHVTDFTNAARTMLFDIHALDWDARLLEALDIPREMLPQVRSSSEVYGHACIAGGDEDDGIPIAGIAGDQQAALFGHMCVEPGQGKNTYGTGCFLLMNTGAKAVRSGHGLLTTIACGPRGEVAYALEGAIFNAGSTVQWLRDELKLIDDSFDSEYFATKVQDSNGVYLVPAFTGLGAPYWDPYARGAVFGLTRGVKADHLIRAALESIAYQTCDVLDAMQRDAGERLKALRVDGGAVSNNFLMQFQADLLGTPVERPAVKEVTALGAAYLAGLATGFWSGLDELRDKARIERVFEPACSEEKRRSLSAGWKKAVLRSQRWAEDD.

An ADP-binding site is contributed by Thr-17. 3 residues coordinate ATP: Thr-17, Thr-18, and Ser-19. Thr-17 lines the sn-glycerol 3-phosphate pocket. Arg-21 lines the ADP pocket. Sn-glycerol 3-phosphate-binding residues include Arg-87, Glu-88, Tyr-139, and Asp-250. Residues Arg-87, Glu-88, Tyr-139, Asp-250, and Gln-251 each contribute to the glycerol site. Residues Thr-272 and Gly-315 each contribute to the ADP site. Thr-272, Gly-315, Gln-319, and Gly-416 together coordinate ATP. ADP-binding residues include Gly-416 and Asn-420.

Belongs to the FGGY kinase family.

It catalyses the reaction glycerol + ATP = sn-glycerol 3-phosphate + ADP + H(+). It functions in the pathway polyol metabolism; glycerol degradation via glycerol kinase pathway; sn-glycerol 3-phosphate from glycerol: step 1/1. With respect to regulation, inhibited by fructose 1,6-bisphosphate (FBP). In terms of biological role, key enzyme in the regulation of glycerol uptake and metabolism. Catalyzes the phosphorylation of glycerol to yield sn-glycerol 3-phosphate. This is Glycerol kinase from Azotobacter vinelandii (strain DJ / ATCC BAA-1303).